Reading from the N-terminus, the 1262-residue chain is Histone-lysine N-methyltransferase eggless (1262 aa).

The segment at 1–194 is disordered; that stretch reads MSGQPTAVDC…MEVDQDVEES (194 aa). Basic and acidic residues-rich tracts occupy residues 26–41, 50–61, and 81–99; these read ASREKSYGLPVRKGEN, AAKDVEIEELTH, and APDEPGKLADESEDRKGEN. Low complexity predominate over residues 157–166; that stretch reads SSISSPTSES. Over residues 167–179 the composition is skewed to basic and acidic residues; it reads FPEKDEKTNKENE. Serine 215 carries the post-translational modification Phosphoserine. Threonine 217 carries the post-translational modification Phosphothreonine. Residues 353-420 adopt a coiled-coil conformation; the sequence is EKSDFSKNKL…LEKVQTTADK (68 aa). Tudor domains lie at 529–602 and 629–686; these read RLTI…SEKV and QCTR…RETQ. A disordered region spans residues 743–764; sequence SSAATPAGGRTNAGGVSTSNSA. The MBD domain occupies 818-884; that stretch reads LDSYSPLAKP…DNFDFTPDLK (67 aa). Residues 946 to 1018 enclose the Pre-SET domain; the sequence is LCCDCEDDCS…NCLNRVVQFS (73 aa). Zn(2+)-binding residues include cysteine 948, cysteine 950, cysteine 954, cysteine 960, cysteine 962, cysteine 1000, cysteine 1004, cysteine 1006, and cysteine 1010. Residues 1021 to 1237 enclose the SET domain; sequence MKLQVFKTSN…SGTELTWNYN (217 aa). S-adenosyl-L-methionine contacts are provided by residues 1031–1033, aspartate 1069, and tyrosine 1071; that span reads RGW. The segment covering 1086 to 1097 has biased composition (basic and acidic residues); the sequence is EGYESEVDHSDP. A disordered region spans residues 1086–1148; the sequence is EGYESEVDHS…QSSELDSQER (63 aa). Positions 1098–1113 are enriched in acidic residues; that stretch reads DAEEDNGGPDAEDDDD. Positions 1129–1141 are enriched in low complexity; it reads RSGSTQNSSTQSS. S-adenosyl-L-methionine contacts are provided by residues arginine 1191 and 1194–1195; that span reads NH. Zn(2+) contacts are provided by cysteine 1197, cysteine 1250, cysteine 1252, and cysteine 1257. The Post-SET domain occupies 1246-1262; sequence KVLYCQCGAPNCRLRLL.

The protein belongs to the class V-like SAM-binding methyltransferase superfamily. Histone-lysine methyltransferase family. Suvar3-9 subfamily. In terms of tissue distribution, expressed in ovary (at protein level).

Its subcellular location is the nucleus. It is found in the chromosome. The catalysed reaction is L-lysyl(9)-[histone H3] + 3 S-adenosyl-L-methionine = N(6),N(6),N(6)-trimethyl-L-lysyl(9)-[histone H3] + 3 S-adenosyl-L-homocysteine + 3 H(+). Functionally, histone methyltransferase that specifically trimethylates 'Lys-10' of histone H3 (H3K9me3) in ovary. H3K9me3 represents a specific tag for epigenetic transcriptional repression by recruiting Su(var)205/HP1 to methylated histones. Plays a central role during oogenesis. The protein is Histone-lysine N-methyltransferase eggless (egg) of Drosophila melanogaster (Fruit fly).